A 965-amino-acid polypeptide reads, in one-letter code: Collagen alpha-1(I) chain (965 aa).

The segment covering 1–21 (SVPGPMGPSGPRGLPGPPGPG) has biased composition (pro residues). Residues 1 to 965 (SVPGPMGPSG…PGPPGPPGPP (965 aa)) are disordered. Residues Pro15, Pro18, Pro20, Pro29, Pro32, Pro35, Pro49, Pro64, Pro70, Pro79, and Pro85 each carry the 4-hydroxyproline modification. Residues 52–66 (NGDDGEAGKPGRPGE) show a composition bias toward basic and acidic residues. Lys88 bears the 5-hydroxylysine; alternate mark. O-linked (Gal...) hydroxylysine; alternate glycosylation is present at Lys88. The residue at position 94 (Ser94) is a Phosphoserine. Low complexity predominate over residues 102–118 (DAGPAGPKGEPGSPGEN). A 4-hydroxyproline mark is found at Pro112, Pro115, Pro121, Pro130, Pro136, Pro157, Pro166, Pro169, Pro196, Pro199, Pro211, Pro217, Pro226, Pro232, Pro235, and Pro250. Positions 136 to 154 (PGASGPAGARGNDGATGAA) are enriched in low complexity. A compositionally biased stretch (pro residues) spans 156 to 168 (PPGPTGPAGPPGF). Over residues 202 to 241 (AGAAGPAGNPGADGQPGAKGANGAPGIAGAPGFPGARGPS) the composition is skewed to low complexity. The residue at position 253 (Lys253) is a 5-hydroxylysine. 8 positions are modified to 4-hydroxyproline: Pro259, Pro262, Pro273, Pro282, Pro297, Pro303, Pro312, and Pro318. Gly residues predominate over residues 307–327 (GERGGPGSRGFPGADGAGPKG). 5-hydroxylysine is present on Lys326. 4-hydroxyproline is present on residues Pro335, Pro344, Pro350, Pro356, Pro365, Pro368, Pro377, Pro386, Pro392, Pro404, Pro413, Pro422, Pro425, Pro443, Pro460, Pro466, Pro472, Pro480, Pro492, Pro501, Pro509, Pro515, and Pro524. Residues 359 to 385 (KGLTGSPGSPGPDGKTGPPGPAGQDGR) are compositionally biased toward low complexity. Over residues 394–413 (ARGQAGVMGFPGPKGAAGEP) the composition is skewed to low complexity. Over residues 472–482 (PGEADLGAPGP) the composition is skewed to low complexity. Position 536 is a 5-hydroxylysine (Lys536). Residues Pro542, Pro557, and Pro563 each carry the 4-hydroxyproline modification. Low complexity predominate over residues 569–583 (SGPSGPAGPTGARGA). Residue Ser572 is modified to Phosphoserine. 8 positions are modified to 4-hydroxyproline: Pro584, Pro590, Pro593, Pro602, Pro608, Pro626, Pro635, and Pro644. The segment covering 596–623 (AGFAGPPGADGQPGAKGEPGDAGAKGDA) has biased composition (low complexity). The span at 625-637 (PPGPAGPTGPPGP) shows a compositional bias: pro residues. Lys647 bears the 5-hydroxylysine mark. Positions 652–668 (SAGPPGATGFPGAAGRV) are enriched in low complexity. 4-hydroxyproline is present on residues Pro656 and Pro662. The residue at position 670 (Pro670) is a 3-hydroxyproline. 4-hydroxyproline occurs at positions 671, 680, 683, 704, 713, 721, 730, 748, 757, 760, 766, 771, 777, 783, 791, and 797. Over residues 697 to 706 (ETGPAGRPGE) the composition is skewed to low complexity. Over residues 718 to 730 (KGSPGADGPAGAP) the composition is skewed to low complexity. The segment covering 768–780 (KGPPGPMGPPGLA) has biased composition (pro residues). Position 806 is a 5-hydroxylysine (Lys806). Residues 815–830 (SGPPGAPGAPGAPGPV) show a composition bias toward pro residues. Residues Pro818, Pro821, and Pro824 each carry the 4-hydroxyproline modification. Positions 851 to 865 (AGPAGARGPAGPQGP) are enriched in low complexity. A compositionally biased stretch (basic and acidic residues) spans 866–880 (RGDKGETGEQGDRGI). Position 869 is a 5-hydroxylysine (Lys869). Lys881 carries the 5-hydroxylysine; alternate modification. Lys881 carries an O-linked (Gal...) hydroxylysine; alternate glycan. 4-hydroxyproline is present on residues Pro896, Pro899, Pro917, and Pro932. Residues 899 to 932 (PGEQGPSGASGPAGPRGPPGSAGSPGKDGLNGLP) show a composition bias toward low complexity. Position 937 is a 3-hydroxyproline (Pro937). 4-hydroxyproline is present on Pro938. Residues 950 to 965 (VGPPGPPGPPGPPGPP) are compositionally biased toward pro residues. Pro952 carries the 3-hydroxyproline modification. Pro953 is subject to 4-hydroxyproline. 3-hydroxyproline is present on Pro955. 4-hydroxyproline is present on Pro956. Pro958 bears the 3-hydroxyproline mark. A 4-hydroxyproline mark is found at Pro959, Pro962, and Pro965.

The protein belongs to the fibrillar collagen family. In terms of assembly, trimers of one alpha 2(I) and two alpha 1(I) chains. Post-translationally, contains mostly 4-hydroxyproline. Proline residues at the third position of the tripeptide repeating unit (G-X-Y) are hydroxylated in some or all of the chains. In terms of processing, contains 3-hydroxyproline at a few sites. This modification occurs on the first proline residue in the sequence motif Gly-Pro-Hyp, where Hyp is 4-hydroxyproline. Lysine residues at the third position of the tripeptide repeating unit (G-X-Y) are 5-hydroxylated in some or all of the chains. Post-translationally, O-glycosylated on hydroxylated lysine residues. The O-linked glycan consists of a Glc-Gal disaccharide. In terms of tissue distribution, expressed in bones.

The protein resides in the secreted. It localises to the extracellular space. It is found in the extracellular matrix. Its function is as follows. Type I collagen is a member of group I collagen (fibrillar forming collagen). The sequence is that of Collagen alpha-1(I) chain from Scelidotherium sp. (strain SLP-2019) (South American ground sloth).